A 1377-amino-acid chain; its full sequence is DNA-directed RNA polymerase subunit beta' (1377 aa).

Positions 60, 62, 75, and 78 each coordinate Zn(2+). Residues aspartate 449, aspartate 451, and aspartate 453 each coordinate Mg(2+). Residues cysteine 777, cysteine 851, cysteine 858, and cysteine 861 each coordinate Zn(2+).

The protein belongs to the RNA polymerase beta' chain family. As to quaternary structure, the RNAP catalytic core consists of 2 alpha, 1 beta, 1 beta' and 1 omega subunit. When a sigma factor is associated with the core the holoenzyme is formed, which can initiate transcription. The cofactor is Mg(2+). Zn(2+) is required as a cofactor.

It catalyses the reaction RNA(n) + a ribonucleoside 5'-triphosphate = RNA(n+1) + diphosphate. In terms of biological role, DNA-dependent RNA polymerase catalyzes the transcription of DNA into RNA using the four ribonucleoside triphosphates as substrates. In Borrelia turicatae (strain 91E135), this protein is DNA-directed RNA polymerase subunit beta'.